Here is a 304-residue protein sequence, read N- to C-terminus: RNA polymerase II holoenzyme cyclin-like subunit (304 aa).

Positions 43 to 174 constitute a Cyclin N-terminal domain; it reads TIHDSKANKQ…LIEELQSYLI (132 aa).

The protein belongs to the cyclin family. Cyclin C subfamily. In terms of assembly, component of the SRB8-11 complex, a regulatory module of the Mediator complex.

It localises to the nucleus. Functionally, component of the SRB8-11 complex. The SRB8-11 complex is a regulatory module of the Mediator complex which is itself involved in regulation of basal and activated RNA polymerase II-dependent transcription. The SRB8-11 complex may be involved in the transcriptional repression of a subset of genes regulated by Mediator. It may inhibit the association of the Mediator complex with RNA polymerase II to form the holoenzyme complex. The SRB8-11 complex phosphorylates the C-terminal domain (CTD) of the largest subunit of RNA polymerase II. This is RNA polymerase II holoenzyme cyclin-like subunit (SSN8) from Kluyveromyces lactis (strain ATCC 8585 / CBS 2359 / DSM 70799 / NBRC 1267 / NRRL Y-1140 / WM37) (Yeast).